We begin with the raw amino-acid sequence, 1058 residues long: Vacuolar protein sorting-associated protein 54 (1058 aa).

Residues 369–389 are a coiled coil; that stretch reads SKKIVEVHERYEQKKKLLAKL.

Belongs to the VPS54 family. As to quaternary structure, component of the Golgi-associated retrograde protein (GARP) complex, also called VFT (VPS fifty-three) complex, composed of vps-51, vps-52, vps-53 and vps-54. Within the complex interacts with vps-52 and vps-53.

It localises to the golgi apparatus. Its subcellular location is the trans-Golgi network. Functionally, acts as a component of the GARP complex that is involved in retrograde transport from early and late endosomes to the trans-Golgi network (TGN). The GARP complex facilitates tethering as well as SNARE complex assembly at the Golgi. The sequence is that of Vacuolar protein sorting-associated protein 54 from Caenorhabditis elegans.